We begin with the raw amino-acid sequence, 224 residues long: Ribonuclease HII (224 aa).

The 192-residue stretch at 33–224 folds into the RNase H type-2 domain; that stretch reads FHVAGVDEVG…LKERYRNDVS (192 aa). The a divalent metal cation site is built by Asp39, Glu40, and Asp131.

The protein belongs to the RNase HII family. Requires Mn(2+) as cofactor. It depends on Mg(2+) as a cofactor.

Its subcellular location is the cytoplasm. It catalyses the reaction Endonucleolytic cleavage to 5'-phosphomonoester.. In terms of biological role, endonuclease that specifically degrades the RNA of RNA-DNA hybrids. The polypeptide is Ribonuclease HII (Bartonella tribocorum (strain CIP 105476 / IBS 506)).